Consider the following 361-residue polypeptide: FK506-binding protein 39 kDa (361 aa).

The segment at 122 to 256 is disordered; that stretch reads LVDEEDEEEE…PSSPKTRTLK (135 aa). Residues 123-174 show a composition bias toward acidic residues; it reads VDEEDEEEEESDEDYDLSPTEEDLVETVSGDEESEEESESEDNSASEEDELD. At Ser-192 the chain carries Phosphoserine. The span at 208 to 227 shows a compositional bias: basic and acidic residues; that stretch reads QKVEGTPVKEKKVAFAEKLE. Thr-213 bears the Phosphothreonine mark. Polar residues predominate over residues 241–252; sequence QASSNAPSSPKT. Residue Ser-249 is modified to Phosphoserine. The PPIase FKBP-type domain maps to 275–361; the sequence is GKKVEMRYIG…VFEVKLVRVH (87 aa).

It belongs to the FKBP-type PPIase family. FKBP3/4 subfamily.

The protein resides in the nucleus. The protein localises to the nucleolus. The enzyme catalyses [protein]-peptidylproline (omega=180) = [protein]-peptidylproline (omega=0). PPIase that acts as a histone chaperone. Histone proline isomerase that increases the rate of cis-trans isomerization at prolines on the histone H3 N-terminal tail. Proline isomerization influences H3 methylation thereby regulating gene expression. This is FK506-binding protein 39 kDa from Schizosaccharomyces pombe (strain 972 / ATCC 24843) (Fission yeast).